Here is a 289-residue protein sequence, read N- to C-terminus: ATP synthase gamma chain (289 aa).

The protein belongs to the ATPase gamma chain family. F-type ATPases have 2 components, CF(1) - the catalytic core - and CF(0) - the membrane proton channel. CF(1) has five subunits: alpha(3), beta(3), gamma(1), delta(1), epsilon(1). CF(0) has three main subunits: a, b and c.

The protein resides in the cell membrane. Its function is as follows. Produces ATP from ADP in the presence of a proton gradient across the membrane. The gamma chain is believed to be important in regulating ATPase activity and the flow of protons through the CF(0) complex. In Alkaliphilus metalliredigens (strain QYMF), this protein is ATP synthase gamma chain.